The chain runs to 282 residues: Heat stress transcription factor A-6a (282 aa).

Residues 17-111 mediate DNA binding; sequence PTAFLTKTYN…LLKNIKRRKT (95 aa). The interval 111–177 is hydrophobic repeat HR-A/B; it reads TSSQTQTQSL…MMMNFLLKKI (67 aa). The Bipartite nuclear localization signal motif lies at 175-190; it reads KKIKKPSFLQSLRKRN. An AHA motif is present at residues 261–270; the sequence is EGIWKGFVLS.

The protein belongs to the HSF family. Class A subfamily. Homotrimer. Exhibits temperature-dependent phosphorylation.

It is found in the nucleus. Functionally, transcriptional activator that specifically binds DNA sequence 5'-AGAAnnTTCT-3' known as heat shock promoter elements (HSE). The chain is Heat stress transcription factor A-6a (HSFA6A) from Arabidopsis thaliana (Mouse-ear cress).